The following is a 565-amino-acid chain: Proline--tRNA ligase (565 aa).

Belongs to the class-II aminoacyl-tRNA synthetase family. ProS type 1 subfamily. As to quaternary structure, homodimer.

The protein localises to the cytoplasm. The catalysed reaction is tRNA(Pro) + L-proline + ATP = L-prolyl-tRNA(Pro) + AMP + diphosphate. Functionally, catalyzes the attachment of proline to tRNA(Pro) in a two-step reaction: proline is first activated by ATP to form Pro-AMP and then transferred to the acceptor end of tRNA(Pro). As ProRS can inadvertently accommodate and process non-cognate amino acids such as alanine and cysteine, to avoid such errors it has two additional distinct editing activities against alanine. One activity is designated as 'pretransfer' editing and involves the tRNA(Pro)-independent hydrolysis of activated Ala-AMP. The other activity is designated 'posttransfer' editing and involves deacylation of mischarged Ala-tRNA(Pro). The misacylated Cys-tRNA(Pro) is not edited by ProRS. The chain is Proline--tRNA ligase from Francisella tularensis subsp. tularensis (strain FSC 198).